A 299-amino-acid chain; its full sequence is MLFDQIARNKRKTWLLLLVFFLLLGLVGYGVGNLWLGSGFGGLILALVIGFIYVVTMIFQSTNVVMAMNGAREVDEQTAPNLYHVVEDMAMVAQIPMPRVFIVDDPSMNAFATGSSPKNAAVAATTGLLAVMNREELEGVIGHEVSHIRNYDIRISTIAVALASAITMLAGMARNMMLWGGGRRRNDDDRDGSSGLEIVFLILSLIAIILAPLAATLVQLAISRQREFLADASSVELTRNPQGMINALLKLDNSAPMQHHVDDASAALFINDPKKESGLQKLFYTHPPISERVERLKQM.

Helical transmembrane passes span 14–34 (WLLLLVFFLLLGLVGYGVGNL) and 39–59 (GFGGLILALVIGFIYVVTMIF). Zn(2+) is bound at residue H143. E144 is a catalytic residue. H147 provides a ligand contact to Zn(2+). The next 2 helical transmembrane spans lie at 153–173 (IRISTIAVALASAITMLAGMA) and 198–218 (IVFLILSLIAIILAPLAATLV). A Zn(2+)-binding site is contributed by E227.

The protein belongs to the peptidase M48B family. Zn(2+) serves as cofactor.

The protein localises to the cell membrane. In Streptococcus thermophilus (strain ATCC BAA-250 / LMG 18311), this protein is Protease HtpX homolog.